A 115-amino-acid chain; its full sequence is Holo-[acyl-carrier-protein] synthase (115 aa).

The Mg(2+) site is built by Asp-6 and Glu-51.

This sequence belongs to the P-Pant transferase superfamily. AcpS family. Mg(2+) serves as cofactor.

It is found in the cytoplasm. The enzyme catalyses apo-[ACP] + CoA = holo-[ACP] + adenosine 3',5'-bisphosphate + H(+). Its function is as follows. Transfers the 4'-phosphopantetheine moiety from coenzyme A to a Ser of acyl-carrier-protein. The protein is Holo-[acyl-carrier-protein] synthase of Campylobacter jejuni subsp. jejuni serotype O:2 (strain ATCC 700819 / NCTC 11168).